A 376-amino-acid polypeptide reads, in one-letter code: Queuine tRNA-ribosyltransferase (376 aa).

Aspartate 92 (proton acceptor) is an active-site residue. Substrate is bound by residues 92–96 (DSGGF), aspartate 146, glutamine 190, and glycine 217. Residues 248-254 (GVGRPED) are RNA binding. Aspartate 267 (nucleophile) is an active-site residue. Residues 272 to 276 (TRNAR) form an RNA binding; important for wobble base 34 recognition region. Zn(2+) contacts are provided by cysteine 305, cysteine 307, cysteine 310, and histidine 337.

This sequence belongs to the queuine tRNA-ribosyltransferase family. Homodimer. Within each dimer, one monomer is responsible for RNA recognition and catalysis, while the other monomer binds to the replacement base PreQ1. Zn(2+) is required as a cofactor.

The catalysed reaction is 7-aminomethyl-7-carbaguanine + guanosine(34) in tRNA = 7-aminomethyl-7-carbaguanosine(34) in tRNA + guanine. The protein operates within tRNA modification; tRNA-queuosine biosynthesis. Catalyzes the base-exchange of a guanine (G) residue with the queuine precursor 7-aminomethyl-7-deazaguanine (PreQ1) at position 34 (anticodon wobble position) in tRNAs with GU(N) anticodons (tRNA-Asp, -Asn, -His and -Tyr). Catalysis occurs through a double-displacement mechanism. The nucleophile active site attacks the C1' of nucleotide 34 to detach the guanine base from the RNA, forming a covalent enzyme-RNA intermediate. The proton acceptor active site deprotonates the incoming PreQ1, allowing a nucleophilic attack on the C1' of the ribose to form the product. After dissociation, two additional enzymatic reactions on the tRNA convert PreQ1 to queuine (Q), resulting in the hypermodified nucleoside queuosine (7-(((4,5-cis-dihydroxy-2-cyclopenten-1-yl)amino)methyl)-7-deazaguanosine). The protein is Queuine tRNA-ribosyltransferase of Stenotrophomonas maltophilia (strain R551-3).